We begin with the raw amino-acid sequence, 289 residues long: CBY1-interacting BAR domain-containing protein 1 (289 aa).

The transit peptide at 1-47 (MMRRTLENRNAQTKQLQTAVSNVEKHFGELCQIFAAYVRKTARLRDK) directs the protein to the mitochondrion. The tract at residues 10 to 220 (NAQTKQLQTA…NIDEDEDLEV (211 aa)) is BAR-like. Positions 107–178 (KMKRDDLKAT…INNFERQKMK (72 aa)) form a coiled coil. A disordered region spans residues 265–289 (LRKDQQAEDDEDDELDVTEEENFLK). Positions 271-289 (AEDDEDDELDVTEEENFLK) are enriched in acidic residues.

Belongs to the CIBAR family. In terms of assembly, homodimer (via BAR-like domain). Heterodimer with FAM92B (via BAR-like domains). Interacts (via BAR-like domain) with CBY1; this interaction is required for targeting FAM92A to centriole and cilium basal body. Interacts (via BAR-like domain) with CBY3; both proteins form a ninefold symmetric structure at the flagellar base; are recruited to the annulus in a mutually dependent manner and regulate annulus positionning.

Its subcellular location is the cytoplasm. It localises to the cytoskeleton. The protein localises to the microtubule organizing center. It is found in the centrosome. The protein resides in the centriole. Its subcellular location is the cilium basal body. It localises to the cell projection. The protein localises to the cilium. It is found in the nucleus. The protein resides in the mitochondrion inner membrane. Its subcellular location is the flagellum. Functionally, plays a critical role in regulating mitochondrial ultrastructure and function by maintaining the integrity of mitochondrial morphology, particularly the organization of cristae. Preferentially binds to negatively charged phospholipids like cardiolipin and phosphatidylinositol 4,5-bisphosphate enhancing its interaction with mitochondrial membranes. Induces membrane curvature and tubulation, which are critical for maintaining mitochondrial ultrastructure and the organization of cristae. Plays a crucial role in ciliogenesis. May play a role in limb development through its role in ciliogenesis. Plays a key role in the correct positioning of the annulus, a septin-based ring structure in the sperm flagellum, serving both as a physical barrier and a membrane diffusion barrier that separates the midpiece (MP) from the principal piece (PP). This positioning is essential for proper sperm motility and function. Interacts with CBY3 to form a complex which localizes to the curved membrane region of the flagellar pocket. By doing so, may provide stability and rigidity to the periannular membrane to prevent membrane deformation. This function is crucial for halting annulus migration at the proximal end of the fibrous sheath-containing PP. This Homo sapiens (Human) protein is CBY1-interacting BAR domain-containing protein 1.